The following is a 356-amino-acid chain: UDP-N-acetylglucosamine--N-acetylmuramyl-(pentapeptide) pyrophosphoryl-undecaprenol N-acetylglucosamine transferase (356 aa).

UDP-N-acetyl-alpha-D-glucosamine contacts are provided by residues 11 to 13 (TGG), N122, S186, and Q287.

The protein belongs to the glycosyltransferase 28 family. MurG subfamily.

The protein localises to the cell inner membrane. It carries out the reaction di-trans,octa-cis-undecaprenyl diphospho-N-acetyl-alpha-D-muramoyl-L-alanyl-D-glutamyl-meso-2,6-diaminopimeloyl-D-alanyl-D-alanine + UDP-N-acetyl-alpha-D-glucosamine = di-trans,octa-cis-undecaprenyl diphospho-[N-acetyl-alpha-D-glucosaminyl-(1-&gt;4)]-N-acetyl-alpha-D-muramoyl-L-alanyl-D-glutamyl-meso-2,6-diaminopimeloyl-D-alanyl-D-alanine + UDP + H(+). It participates in cell wall biogenesis; peptidoglycan biosynthesis. Its function is as follows. Cell wall formation. Catalyzes the transfer of a GlcNAc subunit on undecaprenyl-pyrophosphoryl-MurNAc-pentapeptide (lipid intermediate I) to form undecaprenyl-pyrophosphoryl-MurNAc-(pentapeptide)GlcNAc (lipid intermediate II). The protein is UDP-N-acetylglucosamine--N-acetylmuramyl-(pentapeptide) pyrophosphoryl-undecaprenol N-acetylglucosamine transferase of Anaplasma marginale (strain St. Maries).